A 533-amino-acid polypeptide reads, in one-letter code: Putative replication factor C large subunit (533 aa).

Positions 1–11 are enriched in polar residues; the sequence is MSKTAKNTKTI. The tract at residues 1 to 31 is disordered; sequence MSKTAKNTKTIKSVKSVNKDNKPNKDNKDDK. The span at 17–31 shows a compositional bias: basic and acidic residues; the sequence is VNKDNKPNKDNKDDK.

This sequence belongs to the activator 1 large subunit family.

Its function is as follows. Part of the RFC clamp loader complex which loads the PCNA sliding clamp onto DNA. The protein is Putative replication factor C large subunit of Acanthamoeba polyphaga (Amoeba).